Consider the following 631-residue polypeptide: Phosphomethylpyrimidine synthase (631 aa).

Residues N239, M268, Y297, H333, S353 to G355, D394 to R397, and E433 contribute to the substrate site. Position 437 (H437) interacts with Zn(2+). Y460 lines the substrate pocket. H501 lines the Zn(2+) pocket. Residues C581, C584, and C589 each contribute to the [4Fe-4S] cluster site.

Belongs to the ThiC family. In terms of assembly, homodimer. Requires [4Fe-4S] cluster as cofactor.

It catalyses the reaction 5-amino-1-(5-phospho-beta-D-ribosyl)imidazole + S-adenosyl-L-methionine = 4-amino-2-methyl-5-(phosphooxymethyl)pyrimidine + CO + 5'-deoxyadenosine + formate + L-methionine + 3 H(+). Its pathway is cofactor biosynthesis; thiamine diphosphate biosynthesis. Functionally, catalyzes the synthesis of the hydroxymethylpyrimidine phosphate (HMP-P) moiety of thiamine from aminoimidazole ribotide (AIR) in a radical S-adenosyl-L-methionine (SAM)-dependent reaction. This chain is Phosphomethylpyrimidine synthase, found in Shigella boydii serotype 4 (strain Sb227).